The sequence spans 354 residues: S-adenosylmethionine-dependent nucleotide dehydratase RSAD2 (354 aa).

A Radical SAM core domain is found at 62 to 282; sequence AMTPTSVNYH…LDRHSSISCL (221 aa). Cys-76, Cys-80, and Cys-83 together coordinate [4Fe-4S] cluster.

Belongs to the radical SAM superfamily. RSAD2 family. It depends on [4Fe-4S] cluster as a cofactor. As to expression, constitutively expressed in spleen, head kidney and trunk kidney. Following viral infection, detected in most organs including liver, gill, intestine, heart, muscle and brain.

Its subcellular location is the endoplasmic reticulum membrane. Its function is as follows. Interferon-inducible iron-sulfur (4FE-4S) cluster-binding antiviral protein which plays a major role in the cell antiviral state induced by type I and type II interferon. The chain is S-adenosylmethionine-dependent nucleotide dehydratase RSAD2 from Siniperca chuatsi (Mandarin fish).